We begin with the raw amino-acid sequence, 213 residues long: Pyridoxine/pyridoxamine 5'-phosphate oxidase (213 aa).

Substrate contacts are provided by residues 9–12 and K67; that span reads RKDY. Residues 62-67, 77-78, R83, K84, and Q106 contribute to the FMN site; these read RIVLLK and FT. Residues Y124, R128, and S132 each contribute to the substrate site. FMN-binding positions include 141–142 and W186; that span reads QS. Position 192–194 (192–194) interacts with substrate; it reads RLH. R196 contacts FMN.

This sequence belongs to the pyridoxamine 5'-phosphate oxidase family. As to quaternary structure, homodimer. Requires FMN as cofactor.

It carries out the reaction pyridoxamine 5'-phosphate + O2 + H2O = pyridoxal 5'-phosphate + H2O2 + NH4(+). The catalysed reaction is pyridoxine 5'-phosphate + O2 = pyridoxal 5'-phosphate + H2O2. It functions in the pathway cofactor metabolism; pyridoxal 5'-phosphate salvage; pyridoxal 5'-phosphate from pyridoxamine 5'-phosphate: step 1/1. Its pathway is cofactor metabolism; pyridoxal 5'-phosphate salvage; pyridoxal 5'-phosphate from pyridoxine 5'-phosphate: step 1/1. In terms of biological role, catalyzes the oxidation of either pyridoxine 5'-phosphate (PNP) or pyridoxamine 5'-phosphate (PMP) into pyridoxal 5'-phosphate (PLP). The protein is Pyridoxine/pyridoxamine 5'-phosphate oxidase of Cyanothece sp. (strain PCC 7425 / ATCC 29141).